The primary structure comprises 600 residues: Aspartate--tRNA(Asp/Asn) ligase (600 aa).

E175 provides a ligand contact to L-aspartate. Residues 199-202 (QLFK) are aspartate. L-aspartate is bound at residue R221. ATP contacts are provided by residues 221–223 (RDE) and Q230. H453 provides a ligand contact to L-aspartate. E487 is an ATP binding site. Residue R494 participates in L-aspartate binding. Residue 539-542 (GWDR) coordinates ATP. The segment at 578-600 (AAQRKESGIDFKPKKGPQGQKEK) is disordered. Basic and acidic residues predominate over residues 580-590 (QRKESGIDFKP).

It belongs to the class-II aminoacyl-tRNA synthetase family. Type 1 subfamily. Homodimer.

The protein localises to the cytoplasm. The catalysed reaction is tRNA(Asx) + L-aspartate + ATP = L-aspartyl-tRNA(Asx) + AMP + diphosphate. In terms of biological role, aspartyl-tRNA synthetase with relaxed tRNA specificity since it is able to aspartylate not only its cognate tRNA(Asp) but also tRNA(Asn). Reaction proceeds in two steps: L-aspartate is first activated by ATP to form Asp-AMP and then transferred to the acceptor end of tRNA(Asp/Asn). In Corynebacterium jeikeium (strain K411), this protein is Aspartate--tRNA(Asp/Asn) ligase.